Here is a 32-residue protein sequence, read N- to C-terminus: U3-theraphotoxin-Hhn1r (32 aa).

3 disulfides stabilise this stretch: Cys2-Cys15, Cys9-Cys20, and Cys14-Cys27.

It belongs to the neurotoxin 10 (Hwtx-1) family. 16 (Hntx-8) subfamily. Expressed by the venom gland.

The protein resides in the secreted. Its function is as follows. Ion channel inhibitor. The protein is U3-theraphotoxin-Hhn1r of Cyriopagopus hainanus (Chinese bird spider).